Consider the following 436-residue polypeptide: Eukaryotic translation initiation factor 4B (436 aa).

Residues 56 to 98 (AKNNSNNTRSGGFGGSFGGRSRLDPALGGGSSDRREEYPVPDA) are disordered. Phosphoserine is present on residues Ser65 and Ser71. Positions 101 to 183 (YRAVINNIPW…RTVYVSVAAP (83 aa)) constitute an RRM domain. The interval 185–406 (RGGGADVDWS…EKQNGDAKEN (222 aa)) is disordered. A 1; approximate repeat occupies 190–210 (DVDWSSARGSNFQGDGREDAP). A 7 X approximate tandem repeats region spans residues 190–350 (DVDWSSARGS…DWGAARGAQF (161 aa)). Tandem repeats lie at residues 211-232 (DLDWGAARGSNFRGPRREREEV), 233-258 (DIDWTAARGSNFQGSSRPPRREREEV), 259-284 (DIDWSAARGSNFQGSSRPPRREREEP), 285-310 (DIDWSAARGSNFQSSSRPPRREREEP), and 311-340 (DIDWSAARGSNFQSSSRPPRREREKEEPAL). Residues 329–338 (PRREREKEEP) are compositionally biased toward basic and acidic residues. The stretch at 341–350 (DWGAARGAQF) is one 7; truncated repeat. 2 stretches are compositionally biased toward basic and acidic residues: residues 359-376 (TYKDRSLTNKKTTDEQPK) and 397-406 (EKQNGDAKEN).

Involved in translation initiation. May be the homolog of mammalian eIF4B and be part of an RNA helicase. STM1/TIF3 is a non-essential gene. This Saccharomyces cerevisiae (strain ATCC 204508 / S288c) (Baker's yeast) protein is Eukaryotic translation initiation factor 4B (TIF3).